A 156-amino-acid polypeptide reads, in one-letter code: Crossover junction endodeoxyribonuclease RuvC (156 aa).

Residues D7, E67, and D139 contribute to the active site. Residues D7, E67, and D139 each contribute to the Mg(2+) site.

This sequence belongs to the RuvC family. Homodimer which binds Holliday junction (HJ) DNA. The HJ becomes 2-fold symmetrical on binding to RuvC with unstacked arms; it has a different conformation from HJ DNA in complex with RuvA. In the full resolvosome a probable DNA-RuvA(4)-RuvB(12)-RuvC(2) complex forms which resolves the HJ. Requires Mg(2+) as cofactor.

The protein resides in the cytoplasm. It carries out the reaction Endonucleolytic cleavage at a junction such as a reciprocal single-stranded crossover between two homologous DNA duplexes (Holliday junction).. In terms of biological role, the RuvA-RuvB-RuvC complex processes Holliday junction (HJ) DNA during genetic recombination and DNA repair. Endonuclease that resolves HJ intermediates. Cleaves cruciform DNA by making single-stranded nicks across the HJ at symmetrical positions within the homologous arms, yielding a 5'-phosphate and a 3'-hydroxyl group; requires a central core of homology in the junction. The consensus cleavage sequence is 5'-(A/T)TT(C/G)-3'. Cleavage occurs on the 3'-side of the TT dinucleotide at the point of strand exchange. HJ branch migration catalyzed by RuvA-RuvB allows RuvC to scan DNA until it finds its consensus sequence, where it cleaves and resolves the cruciform DNA. The polypeptide is Crossover junction endodeoxyribonuclease RuvC (Sphingopyxis alaskensis (strain DSM 13593 / LMG 18877 / RB2256) (Sphingomonas alaskensis)).